A 92-amino-acid polypeptide reads, in one-letter code: Alpha-hemoglobin-stabilizing protein (92 aa).

It belongs to the AHSP family. As to quaternary structure, monomer. Forms a heterodimer with free alpha-hemoglobin. Does not bind beta-hemoglobin nor alpha(2)beta(2) hemoglobin A.

It is found in the cytoplasm. In terms of biological role, acts as a chaperone to prevent the harmful aggregation of alpha-hemoglobin during normal erythroid cell development. Specifically protects free alpha-hemoglobin from precipitation. This chain is Alpha-hemoglobin-stabilizing protein (AHSP), found in Bos taurus (Bovine).